We begin with the raw amino-acid sequence, 189 residues long: Putative biopolymer transport protein ExbB-like 1 (189 aa).

3 helical membrane passes run 14-34 (FVTTLVLVWISLYLVMTLWVF), 99-119 (LVVLSIISSTAPFIGLFGTVV), and 147-167 (LIATAAGILAAIPAYSFYLIL).

Belongs to the ExbB/TolQ family.

Its subcellular location is the cell inner membrane. This chain is Putative biopolymer transport protein ExbB-like 1, found in Helicobacter pylori (strain J99 / ATCC 700824) (Campylobacter pylori J99).